We begin with the raw amino-acid sequence, 595 residues long: MVLAHSINTNPNTNTNTNNTSTTSSTTTIPNDSKILCINFNQDQGCFAISHEQGFLVYNTDPIELRVKRNFIVNSHTTSSRSNHSNGSNSNNNHRNNSTGSNGSVSSSGSNNETTLGYKSTHKSASGSGSGSGSGIGHISMLHRTNYLALIGGGENPKFPINKLIIWDDLKRKTSLSLEFDTPVLNVLLSRVRIIVVLIDQIIVYGFAAPPKKFQTFNTINNPLGIADLSVNSQQSNVHLYNNYSSNSAQAQVSGTTTTTHYDFSKRKSLSPTNSSNSSSTSLKENGTNLTTYPSPSSTTSASASVATITNTPEAATTANPTTATTTATTTATTTTTTTSAKPLVNGIGSSYQTLAFPGRSMGQIQIVDVGNNHHSGTNIKPTINIIKAHKSNIRCLCLNRTGTLIASASITGTIIRIHSTRTTALLYEFRRGIDRAIITSMKFSHDDSKLAVLSDKHTLHVYNIDETQYPNDGGSGGTKDGGGGGRGSKNRHHLLNGLLPYLPNYFQSTWSFCSVNTNKYHTSDLEDNSQQQQQQWVANGTGGGGVDEGVIGWSGNDSIIIIWKLKKIWEKYVIVETENHQYDLIRSSWKRLDS.

The segment at 1 to 28 is disordered; the sequence is MVLAHSINTNPNTNTNTNNTSTTSSTTT. Residues 30–68 form a WD 1 repeat; that stretch reads PNDSKILCINFNQDQGCFAISHEQGFLVYNTDPIELRVK. Composition is skewed to low complexity over residues 76 to 112 and 270 to 339; these read HTTSSRSNHSNGSNSNNNHRNNSTGSNGSVSSSGSNN and LSPT…TTTT. 2 disordered regions span residues 76 to 132 and 264 to 342; these read HTTS…GSGS and FSKR…TSAK. WD repeat units lie at residues 389 to 429 and 434 to 473; these read AHKS…LLYE and IDRAIITSMKFSHDDSKLAVLSDKHTLHVYNIDETQYPND. A disordered region spans residues 467–490; the sequence is ETQYPNDGGSGGTKDGGGGGRGSK. Residues 474–488 show a composition bias toward gly residues; the sequence is GGSGGTKDGGGGGRG.

The protein belongs to the WD repeat PROPPIN family.

Its subcellular location is the vacuole membrane. The protein resides in the cytoplasmic vesicle membrane. In terms of biological role, involved in mitochondrial or peroxisomal functions and amino acid signaling pathways. This Candida albicans (strain SC5314 / ATCC MYA-2876) (Yeast) protein is SVP1-like protein 2 (HSV2).